A 66-amino-acid polypeptide reads, in one-letter code: Large ribosomal subunit protein bL32 (66 aa).

The protein belongs to the bacterial ribosomal protein bL32 family.

The sequence is that of Large ribosomal subunit protein bL32 from Rickettsia bellii (strain OSU 85-389).